Reading from the N-terminus, the 46-residue chain is Protein krueppel (46 aa).

3 C2H2-type zinc fingers span residues Met-1 to His-4, Tyr-10 to His-32, and Tyr-38 to Arg-46.

This sequence belongs to the krueppel C2H2-type zinc-finger protein family.

The protein localises to the nucleus. In terms of biological role, krueppel is a gap class segmentation protein. The protein is Protein krueppel (Kr) of Pholcus phalangioides (Longbodied cellar spider).